The sequence spans 467 residues: ATP synthase subunit beta (467 aa).

ATP is bound at residue 154–161 (GGAGVGKT).

It belongs to the ATPase alpha/beta chains family. In terms of assembly, F-type ATPases have 2 components, CF(1) - the catalytic core - and CF(0) - the membrane proton channel. CF(1) has five subunits: alpha(3), beta(3), gamma(1), delta(1), epsilon(1). CF(0) has three main subunits: a(1), b(2) and c(9-12). The alpha and beta chains form an alternating ring which encloses part of the gamma chain. CF(1) is attached to CF(0) by a central stalk formed by the gamma and epsilon chains, while a peripheral stalk is formed by the delta and b chains.

It is found in the cell inner membrane. The catalysed reaction is ATP + H2O + 4 H(+)(in) = ADP + phosphate + 5 H(+)(out). Produces ATP from ADP in the presence of a proton gradient across the membrane. The catalytic sites are hosted primarily by the beta subunits. The chain is ATP synthase subunit beta from Petrotoga mobilis (strain DSM 10674 / SJ95).